A 1950-amino-acid polypeptide reads, in one-letter code: E3 ubiquitin-protein ligase UBR1 (1950 aa).

Residues histidine 118, cysteine 123, cysteine 136, cysteine 139, cysteine 148, cysteine 151, histidine 157, histidine 160, histidine 161, cysteine 175, cysteine 177, and cysteine 189 each contribute to the Zn(2+) site. The segment at 121–194 (RNCGRKFKIG…SPLHCKAEEQ (74 aa)) adopts a UBR-type zinc-finger fold. Phosphoserine is present on residues serine 296 and serine 300. Positions 678–681 (HVLH) are ubiquitin-binding loop. Aspartate 952 contacts Zn(2+). The UBC2-binding region (U2BR) stretch occupies residues 1165–1200 (KERKRRLAKKHQARLLAKFNNQQTKFMKEHESEFDE). Zn(2+)-binding residues include cysteine 1220, cysteine 1223, cysteine 1295, histidine 1297, histidine 1300, cysteine 1303, cysteine 1320, and cysteine 1323. Residues 1220–1324 (CALCQDSSST…SNAFICPLCQ (105 aa)) form an RING-type; atypical zinc finger. Residues 1333 to 1665 (LCQTSKANTG…YEYCGIIKLI (333 aa)) are cap helical domain (CHD). Residues cysteine 1703, cysteine 1706, histidine 1722, cysteine 1727, histidine 1763, and aspartate 1775 each contribute to the Zn(2+) site. Disordered stretches follow at residues 1826–1846 (RPRR…GEDG) and 1893–1950 (TLQP…REIW). Composition is skewed to acidic residues over residues 1833 to 1846 (TDED…GEDG) and 1934 to 1950 (DEDD…REIW). The residue at position 1938 (serine 1938) is a Phosphoserine.

Belongs to the E3 ubiquitin-protein ligase UBR1-like family. As to quaternary structure, interacts with UBC2. Interacts with RPN2, RPT1 and RPT6 from the 26S proteasome.

The catalysed reaction is S-ubiquitinyl-[E2 ubiquitin-conjugating enzyme]-L-cysteine + [acceptor protein]-L-lysine = [E2 ubiquitin-conjugating enzyme]-L-cysteine + N(6)-ubiquitinyl-[acceptor protein]-L-lysine.. The protein operates within protein modification; protein ubiquitination. In terms of biological role, ubiquitin ligase protein which is a component of the N-end rule pathway. Recognizes and binds to proteins bearing specific N-terminal residues that are destabilizing according to the N-end rule, leading to their ubiquitination and subsequent degradation. Recognizes both type-1 and type-2 N-degrons, containing positively charged amino acids (Arg, Lys and His) and bulky and hydrophobic amino acids, respectively. The protein is E3 ubiquitin-protein ligase UBR1 of Saccharomyces cerevisiae (strain ATCC 204508 / S288c) (Baker's yeast).